The sequence spans 1041 residues: Nuclear pore complex protein NUP98A (1041 aa).

The span at 1-34 (MFGSSNPFGQSSGTSPFGSQSLFGQTSNTSSNNP) shows a compositional bias: polar residues. The interval 1 to 44 (MFGSSNPFGQSSGTSPFGSQSLFGQTSNTSSNNPFAPATPFGTS) is disordered. 44 tandem repeats follow at residues 2–3 (FG), 8–9 (FG), 17–18 (FG), 23–24 (FG), 41–42 (FG), 56–57 (FG), 64–65 (FG), 79–80 (FG), 87–88 (FG), 94–95 (FG), 103–104 (FG), 109–110 (FG), 124–125 (FG), 135–136 (FG), 140–141 (FG), 146–147 (FG), 154–155 (FG), 162–163 (FG), 170–171 (FG), 178–179 (FG), 186–187 (FG), 194–195 (FG), 202–203 (FG), 210–211 (FG), 217–218 (FG), 222–223 (FG), 228–229 (FG), 236–237 (FG), 244–245 (FG), 252–253 (FG), 260–261 (FG), 268–269 (FG), 276–277 (FG), 284–285 (FG), 294–295 (FG), 300–301 (FG), 307–308 (FG), 312–313 (FG), 319–320 (FG), 329–330 (FG), 334–335 (FG), 339–340 (FG), 411–412 (FG), and 427–428 (FG). A 65 X 2 AA repeats of F-G region spans residues 2–677 (FGSSNPFGQS…QPVAVTNPFG (676 aa)). Residues 98-171 (PASSPFGGSS…FGATSTPSFG (74 aa)) form a disordered region. Polar residues predominate over residues 117–171 (STPQSNPFGNSTQQSQPAFGNTSFGSSTPFGATNTPAFGAPSTPSFGATSTPSFG). Disordered regions lie at residues 315-347 (TPSPFGGAQASTPTFGGSGFGQSTFGGQQGGSR) and 392-447 (QRGD…TNPF). The segment covering 430-447 (TSANPTNPFSSSTSTNPF) has biased composition (low complexity). Repeat copies occupy residues 459–460 (FG), 466–467 (FG), 471–472 (FG), 480–481 (FG), 491–492 (FG), 497–498 (FG), 506–507 (FG), 514–515 (FG), 521–522 (FG), 533–534 (FG), 555–556 (FG), 562–563 (FG), 565–566 (FG), 573–574 (FG), 586–587 (FG), 604–605 (FG), 627–628 (FG), 632–633 (FG), 650–651 (FG), 655–656 (FG), and 676–677 (FG). Residues 517–526 (SSSIFGSAPG) are compositionally biased toward low complexity. Residues 517–560 (SSSIFGSAPGQGATPAFGNSQPSTLFNSTPSTGQTGSAFGQTGS) are disordered. The segment covering 533 to 560 (FGNSQPSTLFNSTPSTGQTGSAFGQTGS) has biased composition (polar residues). Positions 734-860 (KYRPGENGPK…KERPYKTLSG (127 aa)) are disordered. The segment covering 782–793 (SRDKSILPKEQR) has biased composition (basic and acidic residues). Positions 831-846 (TSVNANQKPNGTTRSD) are enriched in polar residues. The Peptidase S59 domain maps to 885 to 1027 (QSDYFTEPRI…GEWKFRVEHF (143 aa)).

The protein belongs to the nucleoporin GLFG family. In terms of assembly, part of the nuclear pore complex (NPC). The NPC has an eight-fold symmetrical structure comprising a central transport channel and two rings, the cytoplasmic and nuclear rings, to which eight filaments are attached. The cytoplasmic filaments have loose ends, while the nuclear filaments are joined in a distal ring, forming a nuclear basket. NPCs are highly dynamic in configuration and composition, and can be devided in 3 subcomplexes, the NUP62 subcomplex, the NUP107-160 subcomplex and the NUP93 subcomplex, containing approximately 30 different nucleoporin proteins.

It is found in the nucleus. Its subcellular location is the nuclear pore complex. This chain is Nuclear pore complex protein NUP98A, found in Arabidopsis thaliana (Mouse-ear cress).